The primary structure comprises 113 residues: Large ribosomal subunit protein bL19 (113 aa).

The protein belongs to the bacterial ribosomal protein bL19 family.

In terms of biological role, this protein is located at the 30S-50S ribosomal subunit interface and may play a role in the structure and function of the aminoacyl-tRNA binding site. The protein is Large ribosomal subunit protein bL19 of Corynebacterium urealyticum (strain ATCC 43042 / DSM 7109).